A 110-amino-acid chain; its full sequence is Eukaryotic translation initiation factor eIF1 (110 aa).

Belongs to the SUI1 family.

Probably involved in translation. The polypeptide is Eukaryotic translation initiation factor eIF1 (Anopheles gambiae (African malaria mosquito)).